A 644-amino-acid chain; its full sequence is Protein cueball (644 aa).

The signal sequence occupies residues 1 to 26; sequence MIRIRFGMDVLLVLLLATCLLSPAHG. Over 27-531 the chain is Extracellular; sequence TPLEWDFAVT…VCLTPKVWTS (505 aa). 2 N-linked (GlcNAc...) asparagine glycosylation sites follow: Asn-82 and Asn-108. LDL-receptor class B repeat units lie at residues 121–166, 167–211, and 212–257; these read MNLF…DVCR, RKLY…DQLS, and DRLF…TNDA. Asn-175, Asn-190, and Asn-196 each carry an N-linked (GlcNAc...) asparagine glycan. N-linked (GlcNAc...) asparagine glycosylation occurs at Asn-313. EGF-like domains lie at 398–430 and 433–471; these read EIRECHNYCVHGTCQMSESAYPKCYCQPGFTGE and EVSVCAGLCLNGGHCRASKDEKEAPSCECPAKFGGARCE. Cystine bridges form between Cys-402-Cys-411, Cys-406-Cys-421, Cys-437-Cys-447, Cys-441-Cys-459, and Cys-461-Cys-470. N-linked (GlcNAc...) asparagine glycosylation is found at Asn-473 and Asn-508. A helical membrane pass occupies residues 532 to 552; that stretch reads SVIIILVIGIVSSLLLVAVIV. Over 553-644 the chain is Cytoplasmic; sequence HGIRRLYKPK…LIHNMEDDLY (92 aa).

This sequence belongs to the cueball family.

The protein localises to the cell membrane. Functionally, has a role in spermatogenesis and oogenesis. The polypeptide is Protein cueball (Drosophila erecta (Fruit fly)).